The chain runs to 628 residues: tRNA uridine 5-carboxymethylaminomethyl modification enzyme MnmG (628 aa).

FAD contacts are provided by residues 14–19 (GAGHAG), Val126, and Ser181. 273-287 (GPRYCPSIEDKVVRF) contributes to the NAD(+) binding site. Gln370 lines the FAD pocket.

The protein belongs to the MnmG family. In terms of assembly, homodimer. Heterotetramer of two MnmE and two MnmG subunits. It depends on FAD as a cofactor.

Its subcellular location is the cytoplasm. Functionally, NAD-binding protein involved in the addition of a carboxymethylaminomethyl (cmnm) group at the wobble position (U34) of certain tRNAs, forming tRNA-cmnm(5)s(2)U34. The sequence is that of tRNA uridine 5-carboxymethylaminomethyl modification enzyme MnmG from Exiguobacterium sibiricum (strain DSM 17290 / CCUG 55495 / CIP 109462 / JCM 13490 / 255-15).